The primary structure comprises 332 residues: MAAQMREPKVVVLGGGSWGTTVASICARRGPTLQWVRSRETADDINENHRNSRYLGNDVVLSDTLRATTDFCEAANTADVVVTGVPSHGFRGVLTELARELRPWVPVVSLVKGLEQGTNMRMSQIVEEVLPGHPAGILAGPNIAREVAEGYAAAAVLAMPDQHLATRLSGLFRTRRFRVYTTDDVVGAEMAGALKNVFAIAVGMGYSLGIALVIARALREMTKLGVAMGGSPDTFPGLAGLGDLIVTCTSQRSRNRHVGEQLGAGKPIDEIIASMNQVAEGVKAASVIMEFGLTMPIAREVDAVINHGSTVEQAYRGLIAEVPGHEVHGSGF.

Ser-17, Trp-18, Arg-37, and Lys-112 together coordinate NADPH. Sn-glycerol 3-phosphate is bound by residues Lys-112 and Gly-140. NADPH is bound at residue Ala-144. 5 residues coordinate sn-glycerol 3-phosphate: Lys-195, Asp-243, Ser-253, Arg-254, and Asn-255. The active-site Proton acceptor is the Lys-195. Arg-254 is an NADPH binding site. NADPH is bound by residues Val-278 and Glu-280.

It belongs to the NAD-dependent glycerol-3-phosphate dehydrogenase family.

The protein resides in the cytoplasm. It carries out the reaction sn-glycerol 3-phosphate + NAD(+) = dihydroxyacetone phosphate + NADH + H(+). It catalyses the reaction sn-glycerol 3-phosphate + NADP(+) = dihydroxyacetone phosphate + NADPH + H(+). Its pathway is membrane lipid metabolism; glycerophospholipid metabolism. Functionally, catalyzes the reduction of the glycolytic intermediate dihydroxyacetone phosphate (DHAP) to sn-glycerol 3-phosphate (G3P), the key precursor for phospholipid synthesis. The protein is Glycerol-3-phosphate dehydrogenase [NAD(P)+] 2 of Mycolicibacterium paratuberculosis (strain ATCC BAA-968 / K-10) (Mycobacterium paratuberculosis).